Consider the following 528-residue polypeptide: Peptide chain release factor 3 (528 aa).

The tr-type G domain occupies 11 to 279 (NKRRTFAIIS…GIVEWAPKPL (269 aa)). GTP-binding positions include 20 to 27 (SHPDAGKT), 88 to 92 (DTPGH), and 142 to 145 (NKLD).

This sequence belongs to the TRAFAC class translation factor GTPase superfamily. Classic translation factor GTPase family. PrfC subfamily.

The protein localises to the cytoplasm. In terms of biological role, increases the formation of ribosomal termination complexes and stimulates activities of RF-1 and RF-2. It binds guanine nucleotides and has strong preference for UGA stop codons. It may interact directly with the ribosome. The stimulation of RF-1 and RF-2 is significantly reduced by GTP and GDP, but not by GMP. This Shewanella sp. (strain W3-18-1) protein is Peptide chain release factor 3.